The sequence spans 67 residues: Transcription elongation factor Spt4 (67 aa).

Zn(2+) contacts are provided by Cys-7, Cys-10, Cys-19, and Cys-22.

This sequence belongs to the archaeal Spt4 family. In terms of assembly, heterodimer composed of Spt4 and Spt5. Interacts with RNA polymerase (RNAP). The complex interacts with FttA.

It is found in the chromosome. In terms of biological role, the Stp4-Spt5 complex stimulates transcription elongation on both naked DNA and histone-bound DNA (chromatin), facilitating transcription through the histone barrier. Neither protein functions alone. The complex also stimulates the transcription termination activity of FttA, neither protein alone stimulates FttA-dependent termination. The protein is Transcription elongation factor Spt4 of Thermococcus kodakarensis (strain ATCC BAA-918 / JCM 12380 / KOD1) (Pyrococcus kodakaraensis (strain KOD1)).